The sequence spans 145 residues: MKEPKLSPKQERFIEEYFINDMNATKAAIAAGYSKNSASAIGAENLQKPAIRARIDARLKEINEKKILQANEVLEHLTRIALGQEKEQVLMGIGKGAETKTHVEVSAKDRIKALELLGKAHAVFTDKQKVETNQVIIVDDSGDAE.

A helix-turn-helix (HTH) region spans residues 23-48 (NATKAAIAAGYSKNSASAIGAENLQK).

It belongs to the SPP1-like small terminase family. Homodecamer. Interacts with the terminase large subunit gp2; the active complex is probably composed of a one monomer of gp2 and two or more decamers of gp1.

Functionally, the terminase small subunit specifically recognizes the non-adjacent pacL and pacR packaging subsites and regulates the ATPase activity of the terminase large subunit. The terminase lies at a unique vertex of the procapsid and is composed of two subunits, a small terminase subunit involved in viral DNA recognition (packaging 'pac' sequence), and a large terminase subunit possessing endonucleolytic and ATPase activities. Both terminase subunits heterooligomerize and are docked on the portal protein to form the packaging machine. The terminase large subunit exhibits endonuclease activity and cleaves the viral genome concatemer once the capsid is full (headful packaging). Once the capsid is packaged with the DNA, the terminase complex is substituted by neck proteins. The protein is Terminase small subunit (1) of Bacillus phage rho15 (Bacteriophage rho-15).